The sequence spans 1382 residues: Hepatocyte growth factor receptor (1382 aa).

The signal sequence occupies residues 1–24 (MKASAVLAPGILALLFTLVQGSDG). Topologically, residues 25–935 (ECHEALAKSE…VQPDQNFTGL (911 aa)) are extracellular. The Sema domain occupies 27–516 (HEALAKSEMN…TGKRITKIPL (490 aa)). Residues N45, N100, and N106 are each glycosylated (N-linked (GlcNAc...) asparagine). 4 disulfides stabilise this stretch: C95–C101, C98–C160, C133–C141, and C173–C176. Residues N203 and N359 are each glycosylated (N-linked (GlcNAc...) asparagine). Cystine bridges form between C299–C364 and C386–C398. N400 and N406 each carry an N-linked (GlcNAc...) asparagine glycan. 4 cysteine pairs are disulfide-bonded: C521/C539, C527/C562, C530/C546, and C542/C552. IPT/TIG domains are found at residues 564–656 (PAIH…FSYV), 658–740 (PVIT…FSYQ), and 743–837 (PVVY…LIYV). O-linked (Man) threonine glycosylation occurs at T583. N-linked (GlcNAc...) asparagine glycans are attached at residues N608 and N636. O-linked (Man) threonine glycosylation is found at T677 and T762. 3 N-linked (GlcNAc...) asparagine glycosylation sites follow: N786, N880, and N931. A helical transmembrane segment spans residues 936–956 (IVGVVSISIILLLLLGLFLWM). Over 957–1382 (KKRKQIKDLG…QDNINGEVDT (426 aa)) the chain is Cytoplasmic. S967 carries the phosphoserine modification. T978 is subject to Phosphothreonine. Phosphoserine occurs at positions 991, 998, and 1001. Position 1004 is a phosphotyrosine (Y1004). The 268-residue stretch at 1079 to 1346 (VHFNEVIGRG…RISAIFSTFI (268 aa)) folds into the Protein kinase domain. Residues 1085 to 1093 (IGRGHFGCV) and K1111 each bind ATP. The Proton acceptor role is filled by D1205. Positions 1213–1382 (LDEKFTVKVA…QDNINGEVDT (170 aa)) are interaction with RANBP9. Y1231 carries the post-translational modification Phosphotyrosine. A phosphotyrosine; by autocatalysis mark is found at Y1235 and Y1236. Position 1290 is a phosphothreonine (T1290). The segment at 1321 to 1360 (WHPKAEMRPSFSELVSRISAIFSTFIGEHYVHVNATYVNV) is interaction with MUC20. Phosphotyrosine; by autocatalysis is present on residues Y1350 and Y1357. Y1366 bears the Phosphotyrosine mark.

Belongs to the protein kinase superfamily. Tyr protein kinase family. In terms of assembly, heterodimer made of an alpha chain (50 kDa) and a beta chain (145 kDa) which are disulfide linked. Binds PLXNB1. Interacts when phosphorylated with downstream effectors including STAT3, PIK3R1, SRC, PCLG1, GRB2 and GAB1. Interacts with SPSB1, SPSB2 and SPSB4. Interacts with INPP5D/SHIP1. When phosphorylated at Tyr-1357, interacts with INPPL1/SHIP2. Interacts with RANBP9 and RANBP10, as well as SPSB1, SPSB2, SPSB3 and SPSB4. SPSB1 binding occurs in the presence and in the absence of HGF, however HGF treatment has a positive effect on this interaction. Interacts with MUC20; prevents interaction with GRB2 and suppresses hepatocyte growth factor-induced cell proliferation. Interacts with GRB10. Interacts with PTPN1 and PTPN2. Interacts with HSP90AA1 and HSP90AB1; the interaction suppresses MET kinase activity. Interacts with tensin TNS3. Interacts (when phosphorylated) with tensin TNS4 (via SH2 domain); the interaction increases MET protein stability by inhibiting MET endocytosis and subsequent lysosomal degradation. Autophosphorylated in response to ligand binding on Tyr-1235 and Tyr-1236 in the kinase domain leading to further phosphorylation of Tyr-1350 and Tyr-1357 in the C-terminal multifunctional docking site. Dephosphorylated by PTPRJ at Tyr-1350 and Tyr-1366. Dephosphorylated by PTPN1 and PTPN2. In terms of processing, ubiquitinated. Ubiquitination by CBL regulates the receptor stability and activity through proteasomal degradation. Post-translationally, O-mannosylation of IPT/TIG domains by TMEM260 is required for protein maturation. O-mannosylated residues are composed of single mannose glycans that are not elongated or modified.

It is found in the membrane. It catalyses the reaction L-tyrosyl-[protein] + ATP = O-phospho-L-tyrosyl-[protein] + ADP + H(+). In its inactive state, the C-terminal tail interacts with the catalytic domain and inhibits the kinase activity. Upon ligand binding, the C-terminal tail is displaced and becomes phosphorylated, thus increasing the kinase activity. Functionally, receptor tyrosine kinase that transduces signals from the extracellular matrix into the cytoplasm by binding to hepatocyte growth factor/HGF ligand. Regulates many physiological processes including proliferation, scattering, morphogenesis and survival. Ligand binding at the cell surface induces autophosphorylation of MET on its intracellular domain that provides docking sites for downstream signaling molecules. Following activation by ligand, interacts with the PI3-kinase subunit PIK3R1, PLCG1, SRC, GRB2, STAT3 or the adapter GAB1. Recruitment of these downstream effectors by MET leads to the activation of several signaling cascades including the RAS-ERK, PI3 kinase-AKT, or PLCgamma-PKC. The RAS-ERK activation is associated with the morphogenetic effects while PI3K/AKT coordinates prosurvival effects. During embryonic development, MET signaling plays a role in gastrulation, development and migration of muscles and neuronal precursors, angiogenesis and kidney formation. In adults, participates in wound healing as well as organ regeneration and tissue remodeling. Also promotes differentiation and proliferation of hematopoietic cells. In Microcebus murinus (Gray mouse lemur), this protein is Hepatocyte growth factor receptor (MET).